A 466-amino-acid chain; its full sequence is Ribulose bisphosphate carboxylase large chain (466 aa).

At K5 the chain carries N6,N6,N6-trimethyllysine. N114 and T164 together coordinate substrate. K166 acts as the Proton acceptor in catalysis. Position 168 (K168) interacts with substrate. Residues K192, D194, and E195 each coordinate Mg(2+). An N6-carboxylysine modification is found at K192. Residue H285 is the Proton acceptor of the active site. R286, H318, and S370 together coordinate substrate.

Belongs to the RuBisCO large chain family. Type I subfamily. In terms of assembly, heterohexadecamer of 8 large chains and 8 small chains; disulfide-linked. The disulfide link is formed within the large subunit homodimers. Mg(2+) serves as cofactor. Post-translationally, the disulfide bond which can form in the large chain dimeric partners within the hexadecamer appears to be associated with oxidative stress and protein turnover.

The protein localises to the plastid. The protein resides in the chloroplast. It carries out the reaction 2 (2R)-3-phosphoglycerate + 2 H(+) = D-ribulose 1,5-bisphosphate + CO2 + H2O. The catalysed reaction is D-ribulose 1,5-bisphosphate + O2 = 2-phosphoglycolate + (2R)-3-phosphoglycerate + 2 H(+). In terms of biological role, ruBisCO catalyzes two reactions: the carboxylation of D-ribulose 1,5-bisphosphate, the primary event in carbon dioxide fixation, as well as the oxidative fragmentation of the pentose substrate in the photorespiration process. Both reactions occur simultaneously and in competition at the same active site. The protein is Ribulose bisphosphate carboxylase large chain of Eremothamnus marlothianus.